The chain runs to 314 residues: Peroxidase 2 (314 aa).

Positions 1–23 (MASASSVSLMLLVAAAMASAASA) are cleaved as a signal peptide. The residue at position 24 (Gln24) is a Pyrrolidone carboxylic acid. Disulfide bonds link Cys34/Cys109, Cys67/Cys72, Cys115/Cys310, and Cys194/Cys219. His65 acts as the Proton acceptor in catalysis. Positions 66, 69, 71, 73, and 75 each coordinate Ca(2+). Residue Asn148 is glycosylated (N-linked (GlcNAc...) asparagine). Residue Pro157 participates in substrate binding. N-linked (GlcNAc...) asparagine glycosylation occurs at Asn169. His187 contributes to the heme b binding site. Position 188 (Thr188) interacts with Ca(2+). N-linked (GlcNAc...) asparagine glycosylation occurs at Asn203. Ca(2+) is bound by residues Asp234, Thr237, and Asp242. N-linked (GlcNAc...) asparagine glycosylation is found at Asn274 and Asn309.

Belongs to the peroxidase family. Classical plant (class III) peroxidase subfamily. Ca(2+) serves as cofactor. Heme b is required as a cofactor.

It localises to the secreted. It carries out the reaction 2 a phenolic donor + H2O2 = 2 a phenolic radical donor + 2 H2O. Functionally, removal of H(2)O(2), oxidation of toxic reductants, biosynthesis and degradation of lignin, suberization, auxin catabolism, response to environmental stresses such as wounding, pathogen attack and oxidative stress. These functions might be dependent on each isozyme/isoform in each plant tissue. This chain is Peroxidase 2 (PRX112), found in Oryza sativa subsp. indica (Rice).